Here is a 1680-residue protein sequence, read N- to C-terminus: RAF-like serine/threonine-protein kinase PRAF (1680 aa).

A disordered region spans residues 86 to 163 (FSPSDPHNSV…TPSDDGKDFP (78 aa)). A PB1 domain is found at 166–267 (RVKFMCSFGG…SRLRVFLFPA (102 aa)). Disordered stretches follow at residues 363–388 (LTGNLSNRSNAPSAPSSAPSSPPLLA), 417–516 (PQYT…DSQQ), 556–580 (PDMLQSSGAQPAVSGQQQQGYQPQQ), 594–613 (GANHEGAYRQGDQQQQSQQF), 641–672 (QSTSYHGSAPSSPRPGFRELPSRHLPGGPQLQ), 700–725 (RSFRLSSSPPRYRDHHPHSEERLHRQ), and 1186–1226 (LPNA…LGGQ). A compositionally biased stretch (low complexity) spans 366-388 (NLSNRSNAPSAPSSAPSSPPLLA). Positions 446-482 (HEMHYRSTDSRRGPESPPKKFHDALHQDHPITVEQRR) are enriched in basic and acidic residues. Low complexity-rich tracts occupy residues 560–580 (QSSGAQPAVSGQQQQGYQPQQ) and 603–613 (QGDQQQQSQQF). Residues 641-651 (QSTSYHGSAPS) show a composition bias toward polar residues. Residues 1204-1217 (SRSSSSSLSELSKS) show a composition bias toward low complexity. Ser-1248 is subject to Phosphoserine. The span at 1339–1354 (ASTVDKENQEEVRTGL) shows a compositional bias: basic and acidic residues. Residues 1339–1372 (ASTVDKENQEEVRTGLDEPADEDKANSTGLGSDP) form a disordered region. Ser-1365 carries the phosphoserine modification. The 267-residue stretch at 1389 to 1655 (LEELRELGSG…SDIAKELRTM (267 aa)) folds into the Protein kinase domain. Residues 1395–1403 (LGSGTFGTV) and Lys-1416 contribute to the ATP site. Residue Asp-1518 is the Proton acceptor of the active site. A disordered region spans residues 1661–1680 (PKTQAQTQGQSHPHPQMQIV).

Belongs to the protein kinase superfamily. Ser/Thr protein kinase family. Post-translationally, hyperphosphorylated in response to auxin. Its phosphorylation state is also rapidly stimulated by photosynthetic activity (e.g. in response to blue light and red light irradiation); dephosphorylated in the darkness.

The protein resides in the cytoplasm. The catalysed reaction is L-seryl-[protein] + ATP = O-phospho-L-seryl-[protein] + ADP + H(+). The enzyme catalyses L-threonyl-[protein] + ATP = O-phospho-L-threonyl-[protein] + ADP + H(+). With respect to regulation, activated by auxin via rapid phosphorylation. Regulated by photosynthesis-activity-dependent changes in its phosphorylation status. In terms of biological role, RAF-like protein kinase acting as a central mediator of a fast response pathway to auxin involving proteins phosphorylation, and leading to rapid cellular responses including membrane depolarization and cytoplasmic streaming. Required for general growth and developmental process. Photosynthesis signaling kinase involved in the regulation of the sucrose metabolism involving PGM1. Necessary for optimal chloroplast electron transport rate (ETR). This is RAF-like serine/threonine-protein kinase PRAF from Marchantia polymorpha (Common liverwort).